A 333-amino-acid chain; its full sequence is Antimicrobial peptides (333 aa).

The signal sequence occupies residues 1-23 (MVQKGVVFGVLLILFICSTLTSA). Residues 23–52 (ADSKPNPTKEEEPAKKPDEVSVKSGGPEVS) form a disordered region. Residues 24-54 (DSKPNPTKEEEPAKKPDEVSVKSGGPEVSED) constitute a propeptide, acidic peptide 1. The span at 29–43 (PTKEEEPAKKPDEVS) shows a compositional bias: basic and acidic residues. At Gln55 the chain carries Pyrrolidone carboxylic acid. Disulfide bonds link Cys60–Cys70 and Cys61–Cys74. A propeptide spans 75–102 (ANAEEAAAAIPEASEELAQEEAPVYSED) (acidic peptide 2). A Pyrrolidone carboxylic acid modification is found at Gln103. Cystine bridges form between Cys108-Cys118 and Cys109-Cys122. The propeptide at 123 to 148 (QNAEEAAAAIPEATEKAQEAPVYSED) is acidic peptide 3. Gln149 bears the Pyrrolidone carboxylic acid mark. Intrachain disulfides connect Cys154–Cys164 and Cys155–Cys168. Residues 169–196 (QNAEEAAAAVAIPEASEKAQEGPVYSED) constitute a propeptide, acidic peptide 4. Gln197 is subject to Pyrrolidone carboxylic acid. 2 cysteine pairs are disulfide-bonded: Cys202/Cys212 and Cys203/Cys216. Residues 217-232 (SNAADEVATPEDVEPG) constitute a propeptide, acidic peptide 5. Gln233 carries the post-translational modification Pyrrolidone carboxylic acid. 2 disulfide bridges follow: Cys238-Cys248 and Cys239-Cys252. Positions 253–278 (HNAAEEATLKAFEEEAAREQPVYSED) are cleaved as a propeptide — acidic peptide 6. Gln279 bears the Pyrrolidone carboxylic acid mark. 2 disulfides stabilise this stretch: Cys284-Cys294 and Cys285-Cys298. A propeptide spans 299 to 333 (QSAEEAAAFQAGEVTASLMLIMFKACPCMGPVPSV) (acidic peptide 7).

In terms of processing, the N-terminal of all peptides are blocked. The 4 cysteine residues of all peptides are involved in intrachain disulfide bonds.

It localises to the secreted. Functionally, plays a role in the defense of the germinating seed against microorganisms, by inhibiting the growth of a range of filamentous fungi and bacteria, especially Gram-positive bacteria. Not cytotoxic for cultured human cells and are the smallest known plant-derived antimicrobial peptides. Peptide IB-AMP4 has a higher antifungal activity than IB-AMP1. This chain is Antimicrobial peptides (AMP), found in Impatiens balsamina (Balsam).